The following is an 85-amino-acid chain: Toxin BmKITc (85 aa).

Positions 1 to 21 are cleaved as a signal peptide; the sequence is MKLFLLLVIFASMLNDGLVNA. Positions 22–82 constitute an LCN-type CS-alpha/beta domain; that stretch reads DGYIRGSDGC…KWKYESNTCG (61 aa). 4 disulfide bridges follow: Cys31–Cys81, Cys35–Cys56, Cys42–Cys63, and Cys46–Cys65.

It belongs to the long (4 C-C) scorpion toxin superfamily. Sodium channel inhibitor family. Beta subfamily. As to expression, expressed by the venom gland.

It localises to the secreted. In terms of biological role, depressant insect beta-toxins cause a transient contraction paralysis followed by a slow flaccid paralysis. They bind voltage-independently at site-4 of sodium channels (Nav) and shift the voltage of activation toward more negative potentials thereby affecting sodium channel activation and promoting spontaneous and repetitive firing. The protein is Toxin BmKITc of Olivierus martensii (Manchurian scorpion).